A 1048-amino-acid chain; its full sequence is Histone deacetylase complex subunit SAP130 (1048 aa).

Residues 1–95 (MGPPRHPQAG…LQSREEKQEP (95 aa)) form a disordered region. Positions 40-54 (TGLSQAPSQIANSGS) are enriched in polar residues. Residues 67–80 (ESGRDSEVSAREHM) are compositionally biased toward basic and acidic residues. An Omega-N-methylarginine modification is found at R232. Residue T355 is modified to Phosphothreonine. A phosphoserine mark is found at S442 and S465. Disordered stretches follow at residues 458-477 (PISGHRASPNPVAMETRSDN), 576-617 (IGTP…PEGK), and 649-687 (QTHSQSASTNAPAQGSSPRPSILRKKPATDGAKPKSEIH). Composition is skewed to polar residues over residues 590–613 (GIHSATPINTQGLQPAPMGTQQPQ) and 649–667 (QTHSQSASTNAPAQGSSPR). A Glycyl lysine isopeptide (Lys-Gly) (interchain with G-Cter in SUMO2) cross-link involves residue K785. Residues 819–871 (LSMPTSDLPPGASPRKKPRKQQHVISTEEGDMMETNSTDDEKSTAKSLLVKAE) form a disordered region. An interactions with SIN3A and HDAC1 region spans residues 836–1047 (PRKQQHVIST…KVSKLKRKEK (212 aa)). S855 is subject to Phosphoserine. The residue at position 856 (T856) is a Phosphothreonine. Residues K864 and K869 each participate in a glycyl lysine isopeptide (Lys-Gly) (interchain with G-Cter in SUMO2) cross-link. S875 is subject to Phosphoserine.

The protein belongs to the SAP130 family. As to quaternary structure, component of a mSin3A corepressor complex that contains SIN3A, SAP130, SUDS3/SAP45, ARID4B/SAP180, HDAC1 and HDAC2. Interacts (released by dead or dying cells) with CLEC4E. In terms of processing, acetylated. Sumoylated with SUMO1. In terms of tissue distribution, expressed in various cancer cell ines.

The protein resides in the nucleus. Its function is as follows. Acts as a transcriptional repressor. May function in the assembly and/or enzymatic activity of the mSin3A corepressor complex or in mediating interactions between the complex and other regulatory complexes. The protein is Histone deacetylase complex subunit SAP130 (SAP130) of Homo sapiens (Human).